Consider the following 239-residue polypeptide: MKPFIHNDWWPVLEPEFEKPYYQELRRFLVEEYQHYRIDPDMYHIFTAFEWTPFSQVKVVILGQDPYHNPGQAHGCSFSVLPGTEIPPSLVNIYKELQDDLGVQPVQHGYLKHWADQGVLLLNSVLTVRDGIKTANTHRGHGWEQLTDSAIEKLSARPEPVIFILWGSAARSKIKLIDTQTNIVLQSPHPSPLSAYRGFFGSKPFSKTNIALTSLGETPIDWQLPQQVTISDESTSDTH.

Asp65 (proton acceptor) is an active-site residue.

It belongs to the uracil-DNA glycosylase (UDG) superfamily. UNG family.

The protein resides in the cytoplasm. The enzyme catalyses Hydrolyzes single-stranded DNA or mismatched double-stranded DNA and polynucleotides, releasing free uracil.. Excises uracil residues from the DNA which can arise as a result of misincorporation of dUMP residues by DNA polymerase or due to deamination of cytosine. This Levilactobacillus brevis (strain ATCC 367 / BCRC 12310 / CIP 105137 / JCM 1170 / LMG 11437 / NCIMB 947 / NCTC 947) (Lactobacillus brevis) protein is Uracil-DNA glycosylase.